The primary structure comprises 456 residues: Exodeoxyribonuclease 7 large subunit (456 aa).

The protein belongs to the XseA family. As to quaternary structure, heterooligomer composed of large and small subunits.

The protein localises to the cytoplasm. The enzyme catalyses Exonucleolytic cleavage in either 5'- to 3'- or 3'- to 5'-direction to yield nucleoside 5'-phosphates.. Its function is as follows. Bidirectionally degrades single-stranded DNA into large acid-insoluble oligonucleotides, which are then degraded further into small acid-soluble oligonucleotides. This Shigella boydii serotype 18 (strain CDC 3083-94 / BS512) protein is Exodeoxyribonuclease 7 large subunit.